Here is a 246-residue protein sequence, read N- to C-terminus: ATP synthase subunit b 1 (246 aa).

The helical transmembrane segment at 5–27 (WFTFTAQVINFLVLVGLLRYFLY) threads the bilayer.

Belongs to the ATPase B chain family. In terms of assembly, F-type ATPases have 2 components, F(1) - the catalytic core - and F(0) - the membrane proton channel. F(1) has five subunits: alpha(3), beta(3), gamma(1), delta(1), epsilon(1). F(0) has three main subunits: a(1), b(2) and c(10-14). The alpha and beta chains form an alternating ring which encloses part of the gamma chain. F(1) is attached to F(0) by a central stalk formed by the gamma and epsilon chains, while a peripheral stalk is formed by the delta and b chains.

It is found in the cell inner membrane. Functionally, f(1)F(0) ATP synthase produces ATP from ADP in the presence of a proton or sodium gradient. F-type ATPases consist of two structural domains, F(1) containing the extramembraneous catalytic core and F(0) containing the membrane proton channel, linked together by a central stalk and a peripheral stalk. During catalysis, ATP synthesis in the catalytic domain of F(1) is coupled via a rotary mechanism of the central stalk subunits to proton translocation. In terms of biological role, component of the F(0) channel, it forms part of the peripheral stalk, linking F(1) to F(0). The protein is ATP synthase subunit b 1 of Rhodopirellula baltica (strain DSM 10527 / NCIMB 13988 / SH1).